The primary structure comprises 195 residues: Pyridoxal 5'-phosphate synthase subunit PdxT (195 aa).

46–48 contributes to the L-glutamine binding site; sequence GES. Cys-78 (nucleophile) is an active-site residue. L-glutamine is bound by residues Arg-106 and 134–135; that span reads IR. Active-site charge relay system residues include His-170 and Glu-172.

It belongs to the glutaminase PdxT/SNO family. In the presence of PdxS, forms a dodecamer of heterodimers. Only shows activity in the heterodimer.

It carries out the reaction aldehydo-D-ribose 5-phosphate + D-glyceraldehyde 3-phosphate + L-glutamine = pyridoxal 5'-phosphate + L-glutamate + phosphate + 3 H2O + H(+). The enzyme catalyses L-glutamine + H2O = L-glutamate + NH4(+). It participates in cofactor biosynthesis; pyridoxal 5'-phosphate biosynthesis. Its function is as follows. Catalyzes the hydrolysis of glutamine to glutamate and ammonia as part of the biosynthesis of pyridoxal 5'-phosphate. The resulting ammonia molecule is channeled to the active site of PdxS. The protein is Pyridoxal 5'-phosphate synthase subunit PdxT of Pseudothermotoga lettingae (strain ATCC BAA-301 / DSM 14385 / NBRC 107922 / TMO) (Thermotoga lettingae).